A 229-amino-acid chain; its full sequence is uncharacterized protein (229 aa).

An S4 RNA-binding domain is found at 2-69 (QRLAKLISNA…KSRLWIYYKP (68 aa)). The active-site Nucleophile is Asp102.

The protein belongs to the pseudouridine synthase RsuA family.

It carries out the reaction a uridine in RNA = a pseudouridine in RNA. This is an uncharacterized protein from Rickettsia bellii (strain RML369-C).